The following is a 110-amino-acid chain: Nucleoid-associated protein Mvan_5528 (110 aa).

Belongs to the YbaB/EbfC family. Homodimer.

It is found in the cytoplasm. The protein localises to the nucleoid. Its function is as follows. Binds to DNA and alters its conformation. May be involved in regulation of gene expression, nucleoid organization and DNA protection. The polypeptide is Nucleoid-associated protein Mvan_5528 (Mycolicibacterium vanbaalenii (strain DSM 7251 / JCM 13017 / BCRC 16820 / KCTC 9966 / NRRL B-24157 / PYR-1) (Mycobacterium vanbaalenii)).